A 274-amino-acid chain; its full sequence is Thiamine kinase (274 aa).

Belongs to the thiamine kinase family.

It carries out the reaction thiamine + ATP = thiamine phosphate + ADP + H(+). The protein operates within cofactor biosynthesis; thiamine diphosphate biosynthesis; thiamine phosphate from thiamine: step 1/1. In terms of biological role, catalyzes the ATP-dependent phosphorylation of thiamine to thiamine phosphate. Is involved in thiamine salvage. The protein is Thiamine kinase of Shigella dysenteriae serotype 1 (strain Sd197).